We begin with the raw amino-acid sequence, 47 residues long: Large ribosomal subunit protein bL34 (47 aa).

Belongs to the bacterial ribosomal protein bL34 family.

The chain is Large ribosomal subunit protein bL34 from Mycolicibacterium vanbaalenii (strain DSM 7251 / JCM 13017 / BCRC 16820 / KCTC 9966 / NRRL B-24157 / PYR-1) (Mycobacterium vanbaalenii).